The chain runs to 316 residues: Nucleotide-binding protein Sala_2050 (316 aa).

ATP is bound at residue 18-25 (GLSGAGKS). 69–72 (DSRS) lines the GTP pocket. The disordered stretch occupies residues 283–316 (GYEPTLTHRNLDSAPQDGLEGKPPSAARASGGAR).

The protein belongs to the RapZ-like family.

Displays ATPase and GTPase activities. This Sphingopyxis alaskensis (strain DSM 13593 / LMG 18877 / RB2256) (Sphingomonas alaskensis) protein is Nucleotide-binding protein Sala_2050.